Reading from the N-terminus, the 154-residue chain is NADPH-dependent 7-cyano-7-deazaguanine reductase (154 aa).

The segment covering 1–11 has biased composition (basic and acidic residues); sequence MAKKPVKDLKQ. The tract at residues 1–31 is disordered; the sequence is MAKKPVKDLKQLGHATPVPASPEEATLERVP. The active-site Thioimide intermediate is C52. D59 acts as the Proton donor in catalysis. Residues 74-76 and 93-94 each bind substrate; these read IES and HE.

This sequence belongs to the GTP cyclohydrolase I family. QueF type 1 subfamily.

The protein localises to the cytoplasm. The enzyme catalyses 7-aminomethyl-7-carbaguanine + 2 NADP(+) = 7-cyano-7-deazaguanine + 2 NADPH + 3 H(+). Its pathway is tRNA modification; tRNA-queuosine biosynthesis. In terms of biological role, catalyzes the NADPH-dependent reduction of 7-cyano-7-deazaguanine (preQ0) to 7-aminomethyl-7-deazaguanine (preQ1). The sequence is that of NADPH-dependent 7-cyano-7-deazaguanine reductase from Parvibaculum lavamentivorans (strain DS-1 / DSM 13023 / NCIMB 13966).